A 1145-amino-acid chain; its full sequence is MPRNQGFSDPEYSAEYSAEYSVSLPSDPDRGVGRTHEISVRNSGSCLCLPRFMRLTFVPESLENLYQTYFKRQRHETLLVLVVFAALFDCYVVVMCAVVFSSDKLAPLMVAGFGLVLDIILFVLCKKGLLPDRVSRKVVPYLLWLLISAQIFSYLGLNFSRAHAASDTVGWQAFFVFSFFITLPLSLSPIVIISVVSCVVHTLVLGVTVAQQQQDELEGMQLLREILANVFLYLCAIIVGIMSYYMADRKHRKAFLEARQSLEVKMNLEEQSQQQENLMLSILPKHVADEMLKDMKKDESQKDQQQFNTMYMYRHENVSILFADIVGFTQLSSACSAQELVKLLNELFARFDKLAAKYHQLRIKILGDCYYCICGLPDYREDHAVCSILMGLAMVEAISYVREKTKTGVDMRVGVHTGTVLGGVLGQKRWQYDVWSTDVTVANKMEAGGIPGRVHISQSTMDCLKGEFDVEPGDGGSRCDYLDEKGIETYLIIASKPEVKKTAQNGLNGSAVPNGAPASSKPSSPALIETKEPNGSAHASGSTSEEAEEQEAQADNPSFPNPRRRLRLQDLADRVVDASEDEHELNQLLNEALLERESAQVVKKRNTFLLTMRFMDPEMETRYSVEKEKQSGAAFSCSCVVLFCTAMVEILIDPWLMTNYVTFVVGEVLLLILTICSMAAIFPRSFPKKLVAFSSWIDRTRWARNTWAMLAIFILVMANVVDMLSCLQYYMGPYNMTAGMELDGGCMENPKYYNYVAVLSLIATIMLVQVSHMVKLTLMLLVTGAVTALNLYAWCPVFDEYDHKRFQEKDSPMVALEKMQVLATPGLNGTDSRLPLVPSKYSMTVMMFVMMLSFYYFSRHVEKLARTLFLWKIEVHDQKERVYEMRRWNEALVTNMLPEHVARHFLGSKKRDEELYSQSYDEIGVMFASLPNFADFYTEESINNGGIECLRFLNEIISDFDSLLDNPKFRVITKIKTIGSTYMAASGVTPDVNTNGFTSSSKEEKSDKERWQHLADLADFALAMKDTLTNINNQSFNNFMLRIGMNKGGVLAGVIGARKPHYDIWGNTVNVASRMESTGVMGNIQVVEETQVILREYGFRFVRRGPIFVKGKGELLTFFLKGRDRPAAFPNGSSVTLPHQVVDNP.

The Cytoplasmic portion of the chain corresponds to 1 to 79 (MPRNQGFSDP…FKRQRHETLL (79 aa)). A run of 5 helical transmembrane segments spans residues 80-100 (VLVV…AVVF), 105-125 (LAPL…FVLC), 139-159 (VPYL…GLNF), 173-193 (AFFV…IVII), and 226-246 (ILAN…SYYM). Asp324, Ile325, and Asp368 together coordinate Mg(2+). ATP is bound by residues 324 to 329 (DIVGFT) and 366 to 368 (LGD). A helical transmembrane segment spans residues 381–401 (EDHAVCSILMGLAMVEAISYV). Residues 402 to 631 (REKTKTGVDM…RYSVEKEKQS (230 aa)) lie on the Cytoplasmic side of the membrane. Arg412 serves as a coordination point for ATP. Residue Lys465 forms a Glycyl lysine isopeptide (Lys-Gly) (interchain with G-Cter in SUMO3) linkage. Residues 504–564 (QNGLNGSAVP…DNPSFPNPRR (61 aa)) are disordered. Low complexity-rich tracts occupy residues 516–526 (APASSKPSSPA) and 535–544 (GSAHASGSTS). Phosphoserine is present on Ser524. A Phosphoserine modification is found at Ser579. A run of 3 helical transmembrane segments spans residues 632–652 (GAAF…EILI), 663–683 (FVVG…AIFP), and 707–727 (WAML…LSCL). Asn735 carries an N-linked (GlcNAc...) asparagine glycan. 3 helical membrane-spanning segments follow: residues 753–773 (YNYV…VSHM), 774–794 (VKLT…LYAW), and 834–854 (LPLV…MLSF). Topologically, residues 855 to 1145 (YYFSRHVEKL…TLPHQVVDNP (291 aa)) are cytoplasmic. Residues Lys976, 1063–1065 (DIW), and 1070–1074 (NVASR) each bind ATP. Ser1077 carries the post-translational modification Phosphoserine; by CaMK2. Lys1110 is an ATP binding site.

It belongs to the adenylyl cyclase class-4/guanylyl cyclase family. Mg(2+) serves as cofactor. Requires Mn(2+) as cofactor. Post-translationally, N-glycosylated. In terms of processing, rapidly phosphorylated after stimulation by odorants or forskolin. Phosphorylation by CaMK2 at Ser-1077 down-regulates enzyme activity. Sumoylated. Sumoylation is required for targeting of olfactory cilia. As to expression, detected in the acrosomal region of epididymal spermatozoa, the acrosomal region of round spermatids and in elongating spermatids. Detected in cilia in the olfactory epithelium (at protein level). Detected in olfactory epithelium neurons. Detected in brain, testis, late pachytene spermatocytes, round spermatids and elongating spermatids.

Its subcellular location is the cell membrane. It localises to the cell projection. The protein resides in the cilium. It is found in the golgi apparatus. The protein localises to the cytoplasm. It carries out the reaction ATP = 3',5'-cyclic AMP + diphosphate. With respect to regulation, specifically activated by the G alpha protein GNAL/G(olf) in signaling cascades triggered by odorant receptors. Activated by forskolin. After forskolin treatment, activity is further increased by calcium/calmodulin. In the absence of forskolin, calcium/calmodulin has little effect on enzyme activity. Functionally, catalyzes the formation of the signaling molecule cAMP in response to G-protein signaling. Participates in signaling cascades triggered by odorant receptors via its function in cAMP biosynthesis: specifically activated by G alpha protein GNAL/G(olf) in olfactory epithelium. Required for the perception of odorants. Required for normal sperm motility and normal male fertility. Plays a role in regulating insulin levels and body fat accumulation in response to a high fat diet. The protein is Adenylate cyclase type 3 (Adcy3) of Mus musculus (Mouse).